Here is a 218-residue protein sequence, read N- to C-terminus: Large ribosomal subunit protein uL16 (218 aa).

Belongs to the universal ribosomal protein uL16 family. Component of the large ribosomal subunit. Mature ribosomes consist of a small (40S) and a large (60S) subunit. The 40S subunit contains about 33 different proteins and 1 molecule of RNA (18S). The 60S subunit contains about 49 different proteins and 3 molecules of RNA (28S, 5.8S and 5S).

This chain is Large ribosomal subunit protein uL16 (RpL10), found in Drosophila melanogaster (Fruit fly).